Here is a 137-residue protein sequence, read N- to C-terminus: Nucleoside diphosphate kinase (137 aa).

6 residues coordinate ATP: lysine 9, phenylalanine 58, arginine 86, threonine 92, arginine 103, and asparagine 113. Residue histidine 121 is the Pros-phosphohistidine intermediate of the active site.

This sequence belongs to the NDK family. Homotetramer. The cofactor is Mg(2+).

Its subcellular location is the cytoplasm. The enzyme catalyses a 2'-deoxyribonucleoside 5'-diphosphate + ATP = a 2'-deoxyribonucleoside 5'-triphosphate + ADP. It catalyses the reaction a ribonucleoside 5'-diphosphate + ATP = a ribonucleoside 5'-triphosphate + ADP. In terms of biological role, major role in the synthesis of nucleoside triphosphates other than ATP. The ATP gamma phosphate is transferred to the NDP beta phosphate via a ping-pong mechanism, using a phosphorylated active-site intermediate. The sequence is that of Nucleoside diphosphate kinase from Streptococcus pneumoniae (strain P1031).